A 169-amino-acid chain; its full sequence is MRGMNLQLVCLTLLAFSSWSLCSDSEEDVRALEADLLTNMHTSKISKASPPSWKMTLLNVCSLINNVNSPAEEAGDMHDDDLVGKRKLPLVLDGFSLEAMLTIFQLQKICRSRAFQHWEIIQEDILDNVNDKNEKEEVIKRKIPYILKRQLYENKPRRPYILKRGSYYY.

The first 22 residues, 1–22 (MRGMNLQLVCLTLLAFSSWSLC), serve as a signal peptide directing secretion.

The protein belongs to the neurotensin family. In terms of assembly, interacts with NTSR1. Interacts with SORT1. Interacts with SORL1. Neurotensin is cleaved and degraded by Angiotensin-converting enzyme (ACE) and neprilysin (MME).

It is found in the secreted. The protein localises to the cytoplasmic vesicle. Its subcellular location is the secretory vesicle. Functionally, neurotensin may play an endocrine or paracrine role in the regulation of fat metabolism. It causes contraction of smooth muscle. The polypeptide is Neurotensin/neuromedin N (Nts) (Mus musculus (Mouse)).